Consider the following 269-residue polypeptide: MPELPEVETSRRGIEPHLVGATILHAVVRNGRLRWPVSEEIYRLSDQPVLSVQRRAKYLLLELPEGWIIIHLGMSGSLRILPEELPPEKHDHVELVMSNGKVLRYTDPRRFGAWLWTKELEGHNVLTHLGPEPLSDDFNGEYLHQKCAKKKTAIKPWLMDNKLVVGVGNIYASESLFAAGIHPDRLASSLSLAECELLARVIKAVLLRSIEQGGTTLKDFLQSDGKPGYFAQELQVYGRKGEPCRVCGTPIVATKHAQRATFYCRQCQK.

Pro-2 acts as the Schiff-base intermediate with DNA in catalysis. The active-site Proton donor is Glu-3. The active-site Proton donor; for beta-elimination activity is the Lys-57. His-90, Arg-109, and Lys-150 together coordinate DNA. An FPG-type zinc finger spans residues 235 to 269; that stretch reads QVYGRKGEPCRVCGTPIVATKHAQRATFYCRQCQK. Arg-259 (proton donor; for delta-elimination activity) is an active-site residue.

This sequence belongs to the FPG family. As to quaternary structure, monomer. Zn(2+) is required as a cofactor.

The catalysed reaction is Hydrolysis of DNA containing ring-opened 7-methylguanine residues, releasing 2,6-diamino-4-hydroxy-5-(N-methyl)formamidopyrimidine.. It carries out the reaction 2'-deoxyribonucleotide-(2'-deoxyribose 5'-phosphate)-2'-deoxyribonucleotide-DNA = a 3'-end 2'-deoxyribonucleotide-(2,3-dehydro-2,3-deoxyribose 5'-phosphate)-DNA + a 5'-end 5'-phospho-2'-deoxyribonucleoside-DNA + H(+). Its function is as follows. Involved in base excision repair of DNA damaged by oxidation or by mutagenic agents. Acts as a DNA glycosylase that recognizes and removes damaged bases. Has a preference for oxidized purines, such as 7,8-dihydro-8-oxoguanine (8-oxoG). Has AP (apurinic/apyrimidinic) lyase activity and introduces nicks in the DNA strand. Cleaves the DNA backbone by beta-delta elimination to generate a single-strand break at the site of the removed base with both 3'- and 5'-phosphates. The polypeptide is Formamidopyrimidine-DNA glycosylase (Escherichia coli (strain 55989 / EAEC)).